The sequence spans 414 residues: Histidine--tRNA ligase (414 aa).

Belongs to the class-II aminoacyl-tRNA synthetase family. As to quaternary structure, homodimer.

The protein resides in the cytoplasm. It carries out the reaction tRNA(His) + L-histidine + ATP = L-histidyl-tRNA(His) + AMP + diphosphate + H(+). This is Histidine--tRNA ligase from Ehrlichia ruminantium (strain Gardel).